The sequence spans 336 residues: Cyclin-H1-1 (336 aa).

The residue at position 2 (Ala2) is an N-acetylalanine. Residues 297 to 336 (KSCLGHSSSHDESKKREKRSKHKSHRSSNDTPNGAPPPIG) are disordered. Over residues 312 to 322 (REKRSKHKSHR) the composition is skewed to basic residues.

The protein belongs to the cyclin family. As to quaternary structure, interacts with CDKA-1, CDKD-2 and CDKD-3, but not CDKD-1 and CDKF-1.

The protein localises to the cytoplasm. It is found in the nucleus. Its function is as follows. Associates with CDK-2 and CDK-3 and activates the CDK kinases. The chain is Cyclin-H1-1 (CYCH1-1) from Arabidopsis thaliana (Mouse-ear cress).